A 3084-amino-acid polypeptide reads, in one-letter code: Highly reducing polyketide synthase sdnO (3084 aa).

In terms of domain architecture, Ketosynthase family 3 (KS3) spans 4 to 430; that stretch reads PIPLAVVGIA…GTNAHAVLEK (427 aa). Residues Cys178, His313, and His353 each act as for beta-ketoacyl synthase activity in the active site. The interval 541-841 is malonyl-CoA:ACP transacylase (MAT) domain; the sequence is FIFTGQGAQW…LAGPLRQSVA (301 aa). The active-site For malonyltransferase activity is Ser632. Positions 931–1071 are N-terminal hotdog fold; the sequence is HDLLGLRMTD…GSVLIDLVSS (141 aa). Residues 931–1243 form a dehydratase (DH) domain region; sequence HDLLGLRMTD…RSAEADMLVF (313 aa). The region spanning 931 to 1275 is the PKS/mFAS DH domain; that stretch reads HDLLGLRMTD…LRSLAALDGA (345 aa). Catalysis depends on His963, which acts as the Proton acceptor; for dehydratase activity. A C-terminal hotdog fold region spans residues 1099-1275; sequence LQPGEDIPPS…LRSLAALDGA (177 aa). Asp1177 acts as the Proton donor; for dehydratase activity in catalysis. Residues 1733-2045 form an enoylreductase (ER) domain region; it reads GTAHAATFVE…RHENMTKYVV (313 aa). A catalytic ketoreductase (KRc) domain region spans residues 2069 to 2252; sequence ATYVVAGGLG…YMALNIGLIE (184 aa). The 78-residue stretch at 2363 to 2440 folds into the Carrier domain; sequence DIEAFAARAI…ALARKVTLRS (78 aa). Ser2400 is modified (O-(pantetheine 4'-phosphoryl)serine). A disordered region spans residues 2445-2501; sequence GGAGGDASSTGNSESMARTPSDSSTVPTSIPATPSRSPSREPPAKETLTKSQQHLPI. The segment covering 2456–2481 has biased composition (polar residues); sequence NSESMARTPSDSSTVPTSIPATPSRS. A compositionally biased stretch (basic and acidic residues) spans 2482–2492; the sequence is PSREPPAKETL. The segment at 2864–3084 is choline/carnitine acyltransferase domain; that stretch reads HFYSQLNRAF…LGVVRRVVEG (221 aa).

The protein operates within antibiotic biosynthesis. Its function is as follows. Highly reducing polyketide synthase; part of the gene cluster that mediates the biosynthesis of sordarin and hypoxysordarin, glycoside antibiotics with a unique tetracyclic diterpene aglycone structure. First, the geranylgeranyl diphosphate synthase sdnC constructs GGDP from farnesyl diphosphate and isopentenyl diphosphate. The diterpene cyclase sdnA then catalyzes the cyclization of GGDP to afford cycloaraneosene. Cycloaraneosene is then hydroxylated four times by the putative cytochrome P450 monooxygenases sdnB, sdnE, sdnF and sdnH to give a hydroxylated cycloaraneosene derivative such as cycloaraneosene-8,9,13,19-tetraol. Although the order of the hydroxylations is unclear, at least C8, C9 and C13 of the cycloaraneosene skeleton are hydroxylated before the sordaricin formation. Dehydration of the 13-hydroxy group of the hydroxylated cycloaraneosene derivative might be catalyzed by an unassigned hypothetical protein such as sdnG and sdnP to construct the cyclopentadiene moiety. The FAD-dependent oxidoreductase sdnN is proposed to catalyze the oxidation at C9 of the hydroxylated cycloaraneosene derivative and also catalyze the Baeyer-Villiger oxidation to give the lactone intermediate. The presumed lactone intermediate would be hydrolyzed to give an acrolein moiety and a carboxylate moiety. Then, [4+2]cycloaddition would occur between the acrolein moiety and the cyclopentadiene moiety to give sordaricin. SdnN might also be involved in the [4+2]cycloaddition after the hypothesized oxidation to accommodate the oxidized product and prompt the [4+2]cycloaddition. GDP-6-deoxy-D-altrose may be biosynthesized from GDP-D-mannose by the putative GDP-mannose-4,6-dehydratase sdnI and the short-chain dehydrogenase sdnK. The glycosyltransferase sdnJ catalyzes the attachment of 6-deoxy-D-altrose onto the 19-hydroxy group of sordaricin to give 4'-O-demethylsordarin. The methyltransferase sdnD would complete the biosynthesis of sordarin. Sordarin can be further modified into hypoxysordarin. The unique acyl chain at the 3'-hydroxy group of hypoxysordarin would be constructed by an iterative type I PKS sdnO and the trans-acting polyketide methyltransferase sdnL. SdnL would be responsible for the introduction of an alpha-methyl group of the polyketide chain. Alternatively, the putative beta-lactamase-like sdnR might be responsible for the cleavage and transfer of the polyketide chain from the PKS sdnO to sordarin. Two putative cytochrome P450 monooxygenases, sdnQ and sdnT, might catalyze the epoxidations of the polyketide chain to complete the biosynthesis of hypoxysordarin. Transcriptional regulators sdnM and sdnS are presumably encoded for the transcriptional regulation of the expression of the sdn gene cluster. The protein is Highly reducing polyketide synthase sdnO of Sordaria araneosa (Pleurage araneosa).